We begin with the raw amino-acid sequence, 189 residues long: uncharacterized protein (189 aa).

A coiled-coil region spans residues Lys31–Lys54. 4 EF-hand domains span residues Gln47 to Asp82, Val83 to Leu118, Thr120 to Thr155, and Ile157 to Val189. The Ca(2+) site is built by Asp60, Asp62, Ser64, Thr66, Glu71, Asp96, Ser98, Asp100, Gln102, Glu107, Asp133, Asn135, Glu137, and Glu144.

This is an uncharacterized protein from Caenorhabditis elegans.